The primary structure comprises 345 residues: Anthranilate phosphoribosyltransferase (345 aa).

Residues 77-79 (TAG), 82-83 (GD), threonine 87, 89-92 (NVST), 106-114 (KHGNRAVSG), and serine 118 contribute to the 5-phospho-alpha-D-ribose 1-diphosphate site. Glycine 79 lines the anthranilate pocket. Serine 91 serves as a coordination point for Mg(2+). Residue asparagine 109 participates in anthranilate binding. Arginine 164 provides a ligand contact to anthranilate. Mg(2+)-binding residues include aspartate 223 and glutamate 224.

The protein belongs to the anthranilate phosphoribosyltransferase family. As to quaternary structure, homodimer. It depends on Mg(2+) as a cofactor.

It catalyses the reaction N-(5-phospho-beta-D-ribosyl)anthranilate + diphosphate = 5-phospho-alpha-D-ribose 1-diphosphate + anthranilate. It participates in amino-acid biosynthesis; L-tryptophan biosynthesis; L-tryptophan from chorismate: step 2/5. Catalyzes the transfer of the phosphoribosyl group of 5-phosphorylribose-1-pyrophosphate (PRPP) to anthranilate to yield N-(5'-phosphoribosyl)-anthranilate (PRA). This chain is Anthranilate phosphoribosyltransferase, found in Saccharolobus solfataricus (strain ATCC 35092 / DSM 1617 / JCM 11322 / P2) (Sulfolobus solfataricus).